A 472-amino-acid polypeptide reads, in one-letter code: Clampless protein 1 (472 aa).

N-linked (GlcNAc...) asparagine glycosylation is found at N70 and N296.

Required for developmental progression after cells of opposite mating types fuse with one another, essential for processes common to both dikaryotic filament formation and monokaryotic fruiting. A direct target for transcription factors Sxi1-alpha and Sxi2-a. The sequence is that of Clampless protein 1 from Cryptococcus neoformans var. neoformans serotype D (strain B-3501A) (Filobasidiella neoformans).